The chain runs to 78 residues: Defensin-like protein 90 (78 aa).

Residues 1-25 form the signal peptide; that stretch reads MTTKMFSYVLLHSLMMFAIILSSMG. 4 cysteine pairs are disulfide-bonded: C33–C70, C38–C59, C44–C68, and C48–C69.

This sequence belongs to the DEFL family.

It is found in the secreted. The polypeptide is Defensin-like protein 90 (Arabidopsis thaliana (Mouse-ear cress)).